The primary structure comprises 315 residues: Leucine-rich repeat-containing protein 75B (315 aa).

A disordered region spans residues 1 to 23 (MGARLGRRAGPEAGSEAGAAAGC). Low complexity predominate over residues 11–23 (PEAGSEAGAAAGC). 2 LRR repeats span residues 182–195 (LAVL…LSDE) and 207–220 (LPRL…GNRL). The interval 284–315 (PEGSAAGATTPASTWDSTAAGLGPEPQACCAR) is disordered. Over residues 286–297 (GSAAGATTPAST) the composition is skewed to low complexity.

It belongs to the LRRC75 family.

Functionally, may suppress myogenic differentiation by modulating MYOG expression and Erk1/2 signaling. This chain is Leucine-rich repeat-containing protein 75B, found in Homo sapiens (Human).